Here is a 312-residue protein sequence, read N- to C-terminus: Olfactory receptor 10P22 (312 aa).

Residues 1-26 (MGDDNDTDITEFILLGFSGYGFLQGH) are Extracellular-facing. Asn5 carries N-linked (GlcNAc...) asparagine glycosylation. The helical transmembrane segment at 27–47 (LFWGVLCIYVVTLLGNSLIVL) threads the bilayer. The Cytoplasmic segment spans residues 48-57 (LTLADSALHS). The helical transmembrane segment at 58–78 (PMYFFLRHFSVVEILYTTTIV) threads the bilayer. Over 79–89 (PRMLADLRSSC) the chain is Extracellular. Residues 90 to 110 (PTIPLASCFTQLYFFALFGIA) form a helical membrane-spanning segment. Over 111-143 (ECCLLTAMAYDRYAAICCPLHYTTLMSQGTYTG) the chain is Cytoplasmic. A helical transmembrane segment spans residues 144-164 (LVGASYLAGVISGTTHSIFIF). At 165 to 205 (TLPFRGAKTIHHFLCDILPVLRLATASTFWGEVGNLFVTIT) the chain is on the extracellular side. The chain crosses the membrane as a helical span at residues 206 to 226 (FIFVPFLLIVASYACILVTIL). Over 227–236 (GVATSQGRQK) the chain is Cytoplasmic. Residues 237-257 (LFSTCSSHLFVVILFFGTATV) traverse the membrane as a helical segment. Residues 258-271 (AYMRPQADSFGNTD) lie on the Extracellular side of the membrane. Residues 272–292 (QILTLVYTVVTPMCNPFVYSL) traverse the membrane as a helical segment. Residues 293-312 (RNKEVTGAMRRLMKRYLWGP) are Cytoplasmic-facing.

This sequence belongs to the G-protein coupled receptor 1 family.

Its subcellular location is the cell membrane. Odorant receptor. The sequence is that of Olfactory receptor 10P22 from Mus musculus (Mouse).